Here is a 655-residue protein sequence, read N- to C-terminus: p-hydroxybenzoic acid efflux pump subunit AaeB (655 aa).

11 consecutive transmembrane segments (helical) span residues 13-33, 38-58, 69-89, 93-113, 121-141, 152-172, 370-390, 407-427, 431-451, 459-479, and 482-502; these read FAVK…HFQL, WAVL…GGEP, LRII…ISMI, LLMI…SSLV, WGLS…EPLL, EIVI…PRSI, LFWL…IAVV, FIYG…VIIP, QSML…GIEV, MGAL…TFHF, and FLDS…VILL.

The protein belongs to the aromatic acid exporter ArAE (TC 2.A.85) family.

The protein localises to the cell inner membrane. In terms of biological role, forms an efflux pump with AaeA. Could function as a metabolic relief valve, allowing to eliminate certain compounds when they accumulate to high levels in the cell. The protein is p-hydroxybenzoic acid efflux pump subunit AaeB of Salmonella heidelberg (strain SL476).